We begin with the raw amino-acid sequence, 232 residues long: Uracil-DNA glycosylase (232 aa).

D70 acts as the Proton acceptor in catalysis.

The protein belongs to the uracil-DNA glycosylase (UDG) superfamily. UNG family.

It is found in the cytoplasm. It carries out the reaction Hydrolyzes single-stranded DNA or mismatched double-stranded DNA and polynucleotides, releasing free uracil.. Excises uracil residues from the DNA which can arise as a result of misincorporation of dUMP residues by DNA polymerase or due to deamination of cytosine. The protein is Uracil-DNA glycosylase of Campylobacter fetus subsp. fetus (strain 82-40).